Here is a 151-residue protein sequence, read N- to C-terminus: MATLETRLAEMLTPAVEAAGYVVWGIEYVQAGKHSILRVYIDSEQGISVDDCADASRQISAILDVEDPISNEYTLEVSSPGLDRPLFNAAQYARYVGEDVKVQLTMPVEGSRNLKGVIDKVEGQMLTIKVDGKTLVVALDNIRKGNIIAKF.

The protein belongs to the RimP family.

The protein localises to the cytoplasm. Its function is as follows. Required for maturation of 30S ribosomal subunits. In Shewanella amazonensis (strain ATCC BAA-1098 / SB2B), this protein is Ribosome maturation factor RimP.